A 418-amino-acid polypeptide reads, in one-letter code: Probable aminotransferase Rv1178 (418 aa).

Residues 22–42 (GQGWHDRERPASGQGSGAAER) form a disordered region.

It belongs to the class-I pyridoxal-phosphate-dependent aminotransferase family. Requires pyridoxal 5'-phosphate as cofactor.

This chain is Probable aminotransferase Rv1178, found in Mycobacterium tuberculosis (strain ATCC 25618 / H37Rv).